The chain runs to 276 residues: MKLLEQMVYVECFMIIMATLLVSMSYGHRAMINDVAEAPVIDNVGSPTNGLDSSWYDARATFYGDIHGGETQQGACGYGDLFKQGYGLETAALSTALFNEGYTCGACYQIMCVHDPQWCLPGTIKITATNFCPPDYSKTEGVWCNPPQKHFDLSLPMFLKIAQYKAGVVPVKYRRISCARTGGVKFETKGNPYFLMILPYNVGGAGDIKLMQVKGDKTGWITMQKNWGQNWTTGVNLTGQGISFRVTTSDGVTKDFNNVMPNNWGFGQTFDGKINF.

The N-terminal stretch at 1-27 is a signal peptide; that stretch reads MKLLEQMVYVECFMIIMATLLVSMSYG. The 111-residue stretch at 73 to 183 folds into the Expansin-like EG45 domain; it reads QGACGYGDLF…RRISCARTGG (111 aa). An Expansin-like CBD domain is found at 193–272; the sequence is YFLMILPYNV…NWGFGQTFDG (80 aa).

This sequence belongs to the expansin family. Expansin A subfamily.

The protein localises to the secreted. It is found in the cell wall. Its subcellular location is the membrane. Functionally, causes loosening and extension of plant cell walls by disrupting non-covalent bonding between cellulose microfibrils and matrix glucans. No enzymatic activity has been found. In Arabidopsis thaliana (Mouse-ear cress), this protein is Expansin-A25 (EXPA25).